The chain runs to 377 residues: UDP-N-acetylenolpyruvoylglucosamine reductase (377 aa).

In terms of domain architecture, FAD-binding PCMH-type spans 48-215 (LGGTPMAAVR…LGITLQLHTD (168 aa)). Residue Arg193 is part of the active site. The active-site Proton donor is Ser268. The active site involves Glu369.

It belongs to the MurB family. FAD is required as a cofactor.

The protein resides in the cytoplasm. It carries out the reaction UDP-N-acetyl-alpha-D-muramate + NADP(+) = UDP-N-acetyl-3-O-(1-carboxyvinyl)-alpha-D-glucosamine + NADPH + H(+). It participates in cell wall biogenesis; peptidoglycan biosynthesis. Cell wall formation. The chain is UDP-N-acetylenolpyruvoylglucosamine reductase from Corynebacterium diphtheriae (strain ATCC 700971 / NCTC 13129 / Biotype gravis).